Reading from the N-terminus, the 113-residue chain is MNTVRVTFLLVFVLAVSLGQADKDENRMEMQEKTEQGKSYLDFAENLLLQKLEELEAKLLEEDSEESRNSRQKRCIGEGVPCDENDPRCCSGLVCLKPTLHGIWYKSYYCHKK.

Residues 1–21 (MNTVRVTFLLVFVLAVSLGQA) form the signal peptide. A propeptide spanning residues 22-74 (DKDENRMEMQEKTEQGKSYLDFAENLLLQKLEELEAKLLEEDSEESRNSRQKR) is cleaved from the precursor. Positions 61-83 (EEDSEESRNSRQKRCIGEGVPCD) are disordered. Cystine bridges form between C75–C90, C82–C95, and C89–C110.

The protein belongs to the neurotoxin 14 (magi-1) family. 01 (HNTX-16) subfamily. In terms of tissue distribution, expressed by the venom gland.

The protein localises to the secreted. Its function is as follows. Probable ion channel inhibitor. The sequence is that of U11-theraphotoxin-Hhn1r from Cyriopagopus hainanus (Chinese bird spider).